We begin with the raw amino-acid sequence, 307 residues long: tRNA pseudouridine synthase B (307 aa).

Asp38 functions as the Nucleophile in the catalytic mechanism.

Belongs to the pseudouridine synthase TruB family. Type 1 subfamily.

The enzyme catalyses uridine(55) in tRNA = pseudouridine(55) in tRNA. Functionally, responsible for synthesis of pseudouridine from uracil-55 in the psi GC loop of transfer RNAs. In Bacillus thuringiensis (strain Al Hakam), this protein is tRNA pseudouridine synthase B.